Here is a 432-residue protein sequence, read N- to C-terminus: Ribulose bisphosphate carboxylase-like protein 2 (432 aa).

Mg(2+)-binding residues include lysine 198, aspartate 200, and glutamate 201. N6-carboxylysine is present on lysine 198.

It belongs to the RuBisCO large chain family. Type IV subfamily. As to quaternary structure, homodimer. The cofactor is Mg(2+).

Functionally, may be involved in sulfur metabolism and oxidative stress response. Does not show RuBisCO activity. The polypeptide is Ribulose bisphosphate carboxylase-like protein 2 (rlp2) (Rhodopseudomonas palustris (strain ATCC BAA-98 / CGA009)).